We begin with the raw amino-acid sequence, 251 residues long: Flagellar basal-body rod protein FlgF (251 aa).

Belongs to the flagella basal body rod proteins family. As to quaternary structure, the basal body constitutes a major portion of the flagellar organelle and consists of five rings (E,L,P,S, and M) mounted on a central rod. The rod consists of about 26 subunits of FlgG in the distal portion, and FlgB, FlgC and FlgF are thought to build up the proximal portion of the rod with about 6 subunits each.

It localises to the bacterial flagellum basal body. The chain is Flagellar basal-body rod protein FlgF (flgF) from Salmonella typhimurium (strain LT2 / SGSC1412 / ATCC 700720).